A 289-amino-acid polypeptide reads, in one-letter code: Polyamine aminopropyltransferase (289 aa).

Residues 5-245 (PGPITLIEPL…YAVNFILGSL (241 aa)) enclose the PABS domain. Gln-36 is a binding site for S-methyl-5'-thioadenosine. Positions 67 and 91 each coordinate spermidine. S-methyl-5'-thioadenosine contacts are provided by residues Asp-111 and 143–144 (DG). The active-site Proton acceptor is the Asp-164.

This sequence belongs to the spermidine/spermine synthase family. In terms of assembly, homodimer or homotetramer.

Its subcellular location is the cytoplasm. The enzyme catalyses S-adenosyl 3-(methylsulfanyl)propylamine + putrescine = S-methyl-5'-thioadenosine + spermidine + H(+). Its pathway is amine and polyamine biosynthesis; spermidine biosynthesis; spermidine from putrescine: step 1/1. Functionally, catalyzes the irreversible transfer of a propylamine group from the amino donor S-adenosylmethioninamine (decarboxy-AdoMet) to putrescine (1,4-diaminobutane) to yield spermidine. This Pyrobaculum calidifontis (strain DSM 21063 / JCM 11548 / VA1) protein is Polyamine aminopropyltransferase.